A 758-amino-acid polypeptide reads, in one-letter code: Polyribonucleotide nucleotidyltransferase (758 aa).

The Mg(2+) site is built by D488 and D494. The region spanning 555–614 is the KH domain; sequence PKLYTMKINPEKIRDVIGKGGAVIRALTEETGTQINIDEDGTITIASTDSAKADEAKRRI. Positions 624 to 692 constitute an S1 motif domain; sequence GKIYEGPVVK…EKGRVKLSMR (69 aa). A disordered region spans residues 692 to 758; it reads RALLDRPMGD…AGEHSGQMDA (67 aa). Over residues 707 to 735 the composition is skewed to basic and acidic residues; the sequence is PAERGERGDRGDRGDRPERGERRERREPA. The span at 736-745 shows a compositional bias: low complexity; sequence GADQQQQQQQ.

The protein belongs to the polyribonucleotide nucleotidyltransferase family. Mg(2+) serves as cofactor.

Its subcellular location is the cytoplasm. The catalysed reaction is RNA(n+1) + phosphate = RNA(n) + a ribonucleoside 5'-diphosphate. Its function is as follows. Involved in mRNA degradation. Catalyzes the phosphorolysis of single-stranded polyribonucleotides processively in the 3'- to 5'-direction. This chain is Polyribonucleotide nucleotidyltransferase, found in Paracidovorax citrulli (strain AAC00-1) (Acidovorax citrulli).